A 246-amino-acid polypeptide reads, in one-letter code: MSKAVIVIPARYGSSRLPGKPLLDIVGKPMIQHVYERALQVAGVAEVWVATDDPRVEQAVQAFGGKAIMTRNDHESGTDRLVEVMHKVEADIYINLQGDEPMIRPRDVETLLQGMRDDPALPVATLCHAISAAEAAEPSTVKVVVNTRQDALYFSRSPIPYPRNAEKARYLKHVGIYAYRRDVLQNYSQLPESMPEQAESLEQLRLMNAGINIRTFEVAATGPGVDTPACLEKVRALMAQELAENA.

The protein belongs to the KdsB family. As to quaternary structure, homodimer.

It is found in the cytoplasm. The catalysed reaction is 3-deoxy-alpha-D-manno-oct-2-ulosonate + CTP = CMP-3-deoxy-beta-D-manno-octulosonate + diphosphate. Its pathway is nucleotide-sugar biosynthesis; CMP-3-deoxy-D-manno-octulosonate biosynthesis; CMP-3-deoxy-D-manno-octulosonate from 3-deoxy-D-manno-octulosonate and CTP: step 1/1. The protein operates within bacterial outer membrane biogenesis; lipopolysaccharide biosynthesis. Functionally, activates KDO (a required 8-carbon sugar) for incorporation into bacterial lipopolysaccharide in Gram-negative bacteria. The protein is 3-deoxy-manno-octulosonate cytidylyltransferase (kpsU) of Escherichia coli.